The following is a 289-amino-acid chain: LBH domain-containing protein 1 (289 aa).

Disordered stretches follow at residues 1 to 36 and 205 to 289; these read MALV…PLWD and EGAE…ASQD. An LBH domain is found at 1–128; it reads MALVPGRSKE…AEAFFQDQSE (128 aa). A compositionally biased stretch (polar residues) spans 15–25; sequence TRNSPGSSQHP.

As to expression, expressed in bladder cancer tissues (at protein level).

The protein is LBH domain-containing protein 1 of Homo sapiens (Human).